Reading from the N-terminus, the 372-residue chain is Solute carrier family 35 member F6 (372 aa).

Residues 1-18 (MAWTKYQLFLAGLMLVTG) form the signal peptide. 2 helical membrane passes run 48–68 (FVQA…FYLL) and 89–109 (LLFL…YVAL). The EamA domain maps to 105–160 (MYVALNMTSASSFQMLRGAVIIFTGLFSVAFLDRRLAPSQWLGILITIAGLVVVGL). N110 carries an N-linked (GlcNAc...) asparagine glycan. A run of 7 helical transmembrane segments spans residues 116–136 (SFQM…VAFL), 145–165 (WLGI…DLLS), 176–196 (VITG…QMVL), 211–231 (AVGI…VPMF), 261–281 (LIAL…FSGI), 293–312 (MVLD…ALGW), and 320–336 (ILGF…YNGL). T366 bears the Phosphothreonine mark.

Belongs to the SLC35F solute transporter family. In terms of assembly, interacts with SLC25A5.

Its subcellular location is the mitochondrion. It is found in the lysosome membrane. Functionally, involved in the maintenance of mitochondrial membrane potential in pancreatic ductal adenocarcinoma (PDAC) cells. Promotes pancreatic ductal adenocarcinoma (PDAC) cell growth. May play a role as a nucleotide-sugar transporter. The polypeptide is Solute carrier family 35 member F6 (Slc35f6) (Mus musculus (Mouse)).